Consider the following 164-residue polypeptide: Transcription elongation factor GreA (164 aa).

Positions arginine 12–glutamate 38 form a coiled coil.

The protein belongs to the GreA/GreB family.

In terms of biological role, necessary for efficient RNA polymerase transcription elongation past template-encoded arresting sites. The arresting sites in DNA have the property of trapping a certain fraction of elongating RNA polymerases that pass through, resulting in locked ternary complexes. Cleavage of the nascent transcript by cleavage factors such as GreA or GreB allows the resumption of elongation from the new 3'terminus. GreA releases sequences of 2 to 3 nucleotides. The protein is Transcription elongation factor GreA of Solidesulfovibrio magneticus (strain ATCC 700980 / DSM 13731 / RS-1) (Desulfovibrio magneticus).